The primary structure comprises 281 residues: MDTEFLRTLDRQILLGVFVAFVAVGAGAAYFLTSSKKRRVCLDPENFKEFKLVKRHQLSHNVAKFVFELPTSTSVLGLPIGQHISCRGKDGQGEDVIKPYTPTTLDSDVGRFELVIKMYPQGRMSHHFREMRVGDHLAVKGPKGRFKYQPGQFRAFGMLAGGSGITPMFQVARAILENPTDKTKVHLIYANVTYDDILLKEELEGLTTNYPEQFKIFYVLNQPPEVWDGGVGFVSKEMIQTHCPAPASDIQILRCGPPPMNKAMAANLEALGYSPEMQFQF.

Residues 13-33 form a helical membrane-spanning segment; the sequence is ILLGVFVAFVAVGAGAAYFLT. Positions 34-40 match the AKR2A-binding sequence (ABS) required for mitochondrion outer membrane targeting motif; that stretch reads SSKKRRV. The 105-residue stretch at 45 to 149 folds into the FAD-binding FR-type domain; sequence ENFKEFKLVK…KGPKGRFKYQ (105 aa). Residues 129 to 144 and 155 to 187 contribute to the FAD site; these read REMR…GPKG and AFGM…KVHL. Thr166 is subject to Phosphothreonine.

Belongs to the flavoprotein pyridine nucleotide cytochrome reductase family. In terms of assembly, monomer. Interacts with AKR2A. The cofactor is FAD. Expressed in roots, stems, flowers and siliques. Detected in leaves.

The protein resides in the mitochondrion outer membrane. The catalysed reaction is 2 Fe(III)-[cytochrome b5] + NADH = 2 Fe(II)-[cytochrome b5] + NAD(+) + H(+). Its function is as follows. Reductase transferring electrons from NADH to cytochrome b5. Required for the NADH-dependent electron transfer involved in the desaturation and hydroxylation of fatty acids and in the desaturation of sterol precursors. No activity with NADPH as electron donor. This Arabidopsis thaliana (Mouse-ear cress) protein is NADH--cytochrome b5 reductase 1.